A 330-amino-acid chain; its full sequence is MLLLALAFFFPAGDTQNVLPGKISFYGIQISTFFNHTVVENRGSGWLGDMEISSWDSEKETIIFRKPWSKGNFSNDEILEVEEIFQVYFFGFVREAQKHMSDFQVEYPFEIQVISGCEVNSHRSFDYFMRVAVKGLDLLSIKNHSCWPAPEGVSRAQEIWTLILQYKRICDTVEILLTKTCPRYLMSVIEAGKSDLQKQVKPDAWLSQGPSPGPGLLQLVCHVSGFYPKPVWVMWMRGDKELPETQKRDVLPNADETWYLRVTLDVAAEEAAGLSCRVKHSSLEGQDIILYWGHSISIGWIILAVLVPCLIVLVLFILWFYRRWSYEDIF.

A signal peptide spans 1-15 (MLLLALAFFFPAGDT). At 16–299 (QNVLPGKISF…LYWGHSISIG (284 aa)) the chain is on the extracellular side. N-linked (GlcNAc...) asparagine glycans are attached at residues Asn-35, Asn-72, and Asn-143. 2 disulfides stabilise this stretch: Cys-117–Cys-181 and Cys-221–Cys-276. An Ig-like domain is found at 182-292 (PRYLMSVIEA…LEGQDIILYW (111 aa)). The helical transmembrane segment at 300 to 320 (WIILAVLVPCLIVLVLFILWF) threads the bilayer. At 321 to 330 (YRRWSYEDIF) the chain is on the cytoplasmic side. The short motif at 326–329 (YEDI) is the Internalization signal element.

As to quaternary structure, heterodimer with B2M (beta-2-microglobulin). Interacts with saposin C.

The protein localises to the cell membrane. It is found in the endosome membrane. It localises to the lysosome membrane. In terms of biological role, antigen-presenting protein that binds self and non-self lipid and glycolipid antigens and presents them to T-cell receptors on natural killer T-cells. The chain is T-cell surface glycoprotein CD1b4 (CD1B4) from Cavia porcellus (Guinea pig).